The chain runs to 320 residues: MIKKIGILTSGGDSPGMNAIIRSVVCTALNHNIEVKGIYNGFLGLYNNDMKLLKYSHVANLLNQGGTILGSSRFLEFKLEKTRKIAIKNIYKRKIDCLIIIGGDGSYKAANFLTNMGVPCIGIPGTIDNDVSGTDYTVGYFTALETVVDAIDKLRDTSASHHRISIIEIMGRYCGDLTLSAAIAGGCEFIVIPEIIYQKELLLLEIQKSIKKGNKHSIVAITEHICDVNKLAKYIQKKTFKETRATILGHIQRGGKPVAYDRILASRMGIYAIQLLLKGYKGQCIGVINNKIVHHNINYALKNMKKIFKKDLLNSIKKIY.

ATP-binding positions include Gly-12, 73 to 74 (RF), and 103 to 106 (GDGS). Position 104 (Asp-104) interacts with Mg(2+). Residue 126 to 128 (TID) coordinates substrate. The active-site Proton acceptor is Asp-128. Arg-155 contributes to the ADP binding site. Substrate contacts are provided by residues Arg-163 and 170-172 (MGR). ADP contacts are provided by residues 186-188 (GCE) and Lys-212. Residues Glu-223, Arg-244, and 250-253 (HIQR) each bind substrate.

The protein belongs to the phosphofructokinase type A (PFKA) family. ATP-dependent PFK group I subfamily. Prokaryotic clade 'B1' sub-subfamily. Homotetramer. Mg(2+) serves as cofactor.

It localises to the cytoplasm. The enzyme catalyses beta-D-fructose 6-phosphate + ATP = beta-D-fructose 1,6-bisphosphate + ADP + H(+). The protein operates within carbohydrate degradation; glycolysis; D-glyceraldehyde 3-phosphate and glycerone phosphate from D-glucose: step 3/4. Allosterically activated by ADP and other diphosphonucleosides, and allosterically inhibited by phosphoenolpyruvate. Catalyzes the phosphorylation of D-fructose 6-phosphate to fructose 1,6-bisphosphate by ATP, the first committing step of glycolysis. In Buchnera aphidicola subsp. Cinara cedri (strain Cc), this protein is ATP-dependent 6-phosphofructokinase.